A 429-amino-acid chain; its full sequence is Cyclin-B2-1 (429 aa).

Belongs to the cyclin family. Cyclin AB subfamily. In terms of assembly, interacts with CDC20-1 and CDC20-2. In terms of tissue distribution, expressed in roots, stems, leaves, flowers and siliques.

The protein is Cyclin-B2-1 (CYCB2-1) of Arabidopsis thaliana (Mouse-ear cress).